The chain runs to 415 residues: uncharacterized protein (415 aa).

Residues Cys66, Cys72, Cys75, and Cys149 each coordinate [4Fe-4S] cluster. Positions 249, 276, 296, and 344 each coordinate S-adenosyl-L-methionine. The active-site Nucleophile is the Cys370.

This sequence belongs to the class I-like SAM-binding methyltransferase superfamily. RNA M5U methyltransferase family.

This is an uncharacterized protein from Brucella melitensis biotype 1 (strain ATCC 23456 / CCUG 17765 / NCTC 10094 / 16M).